The primary structure comprises 358 residues: 3-isopropylmalate dehydrogenase (358 aa).

75-88 (GPKWETLPPEKQPE) provides a ligand contact to NAD(+). Substrate-binding residues include R96, R106, R135, and D225. Mg(2+)-binding residues include D225, D249, and D253. 283–295 (GSAPDIAGKGVAN) is an NAD(+) binding site.

This sequence belongs to the isocitrate and isopropylmalate dehydrogenases family. LeuB type 1 subfamily. Homodimer. Requires Mg(2+) as cofactor. Mn(2+) is required as a cofactor.

The protein resides in the cytoplasm. It catalyses the reaction (2R,3S)-3-isopropylmalate + NAD(+) = 4-methyl-2-oxopentanoate + CO2 + NADH. It participates in amino-acid biosynthesis; L-leucine biosynthesis; L-leucine from 3-methyl-2-oxobutanoate: step 3/4. In terms of biological role, catalyzes the oxidation of 3-carboxy-2-hydroxy-4-methylpentanoate (3-isopropylmalate) to 3-carboxy-4-methyl-2-oxopentanoate. The product decarboxylates to 4-methyl-2 oxopentanoate. This is 3-isopropylmalate dehydrogenase from Leptospira interrogans serogroup Icterohaemorrhagiae serovar copenhageni (strain Fiocruz L1-130).